Reading from the N-terminus, the 845-residue chain is Beta-mannosidase B (845 aa).

Residue Asn252 is glycosylated (N-linked (GlcNAc...) asparagine). Glu432 functions as the Proton donor in the catalytic mechanism. Asn717 and Asn723 each carry an N-linked (GlcNAc...) asparagine glycan.

Belongs to the glycosyl hydrolase 2 family. Beta-mannosidase B subfamily.

The enzyme catalyses Hydrolysis of terminal, non-reducing beta-D-mannose residues in beta-D-mannosides.. The protein operates within glycan metabolism; N-glycan degradation. In terms of biological role, exoglycosidase that cleaves the single beta-linked mannose residue from the non-reducing end of beta-mannosidic oligosaccharides of various complexity and length. Prefers mannobiose over mannotriose and has no activity against polymeric mannan. Is also severely restricted by galactosyl substitutions at the +1 subsite. The sequence is that of Beta-mannosidase B (mndB) from Aspergillus fumigatus (strain ATCC MYA-4609 / CBS 101355 / FGSC A1100 / Af293) (Neosartorya fumigata).